Here is a 118-residue protein sequence, read N- to C-terminus: Large ribosomal subunit protein bL20 (118 aa).

This sequence belongs to the bacterial ribosomal protein bL20 family.

Its function is as follows. Binds directly to 23S ribosomal RNA and is necessary for the in vitro assembly process of the 50S ribosomal subunit. It is not involved in the protein synthesizing functions of that subunit. The polypeptide is Large ribosomal subunit protein bL20 (Sulfurimonas denitrificans (strain ATCC 33889 / DSM 1251) (Thiomicrospira denitrificans (strain ATCC 33889 / DSM 1251))).